Consider the following 231-residue polypeptide: Coproheme decarboxylase (231 aa).

Residue Lys-44 forms an Isoglutamyl lysine isopeptide (Lys-Gln) (interchain with Q-Cter in protein Pup) linkage. The active site involves Tyr-133. Residue His-156 participates in Fe-coproporphyrin III binding.

Belongs to the ChdC family. Type 2 subfamily. The cofactor is Fe-coproporphyrin III.

It catalyses the reaction Fe-coproporphyrin III + 2 H2O2 + 2 H(+) = heme b + 2 CO2 + 4 H2O. The catalysed reaction is Fe-coproporphyrin III + H2O2 + H(+) = harderoheme III + CO2 + 2 H2O. The enzyme catalyses harderoheme III + H2O2 + H(+) = heme b + CO2 + 2 H2O. The protein operates within porphyrin-containing compound metabolism; protoheme biosynthesis. In terms of biological role, involved in coproporphyrin-dependent heme b biosynthesis. Catalyzes the decarboxylation of Fe-coproporphyrin III (coproheme) to heme b (protoheme IX), the last step of the pathway. The reaction occurs in a stepwise manner with a three-propionate intermediate. This Mycolicibacterium smegmatis (strain ATCC 700084 / mc(2)155) (Mycobacterium smegmatis) protein is Coproheme decarboxylase.